A 98-amino-acid polypeptide reads, in one-letter code: Aspartyl/glutamyl-tRNA(Asn/Gln) amidotransferase subunit C (98 aa).

This sequence belongs to the GatC family. In terms of assembly, heterotrimer of A, B and C subunits.

It catalyses the reaction L-glutamyl-tRNA(Gln) + L-glutamine + ATP + H2O = L-glutaminyl-tRNA(Gln) + L-glutamate + ADP + phosphate + H(+). The catalysed reaction is L-aspartyl-tRNA(Asn) + L-glutamine + ATP + H2O = L-asparaginyl-tRNA(Asn) + L-glutamate + ADP + phosphate + 2 H(+). In terms of biological role, allows the formation of correctly charged Asn-tRNA(Asn) or Gln-tRNA(Gln) through the transamidation of misacylated Asp-tRNA(Asn) or Glu-tRNA(Gln) in organisms which lack either or both of asparaginyl-tRNA or glutaminyl-tRNA synthetases. The reaction takes place in the presence of glutamine and ATP through an activated phospho-Asp-tRNA(Asn) or phospho-Glu-tRNA(Gln). This is Aspartyl/glutamyl-tRNA(Asn/Gln) amidotransferase subunit C from Mycobacterium avium (strain 104).